We begin with the raw amino-acid sequence, 264 residues long: tRNA (guanine-N(1)-)-methyltransferase (264 aa).

S-adenosyl-L-methionine is bound by residues Gly125 and Leu145–Leu150.

This sequence belongs to the RNA methyltransferase TrmD family. In terms of assembly, homodimer.

The protein resides in the cytoplasm. It catalyses the reaction guanosine(37) in tRNA + S-adenosyl-L-methionine = N(1)-methylguanosine(37) in tRNA + S-adenosyl-L-homocysteine + H(+). In terms of biological role, specifically methylates guanosine-37 in various tRNAs. This is tRNA (guanine-N(1)-)-methyltransferase from Burkholderia vietnamiensis (strain G4 / LMG 22486) (Burkholderia cepacia (strain R1808)).